The sequence spans 85 residues: Granaticin polyketide synthase acyl carrier protein (85 aa).

A Carrier domain is found at 3 to 81 (RLTLDGLRTI…VLLDLVNGAQ (79 aa)). Ser-41 carries the O-(pantetheine 4'-phosphoryl)serine modification.

4'-phosphopantetheine is transferred from CoA to a specific serine of the apo-ACP-like protein.

It participates in antibiotic biosynthesis; granaticin biosynthesis. Its function is as follows. Acyl carrier protein. The chain is Granaticin polyketide synthase acyl carrier protein from Streptomyces violaceoruber.